A 91-amino-acid chain; its full sequence is M-myrmeciitoxin-Mb3a (91 aa).

Positions 1–21 (MKLSCLSLALAIILILAIVHS) are cleaved as a signal peptide. Residues 22–54 (PNMEVKALADPEADAFGEANAFGEADAFAEANA) constitute a propeptide that is removed on maturation.

Homodimer; disulfide-linked. In terms of tissue distribution, expressed by the venom gland and reservoir.

Its subcellular location is the secreted. Causes a significant and dose-dependent histamine release, probably by influencing the signal transduction of mast cells through a non-IgE-mediated pathway. This peptide does not have cytotoxic activities. This chain is M-myrmeciitoxin-Mb3a, found in Myrmecia banksi (Jack jumper ant).